The following is a 990-amino-acid chain: DNA ligase 4 (990 aa).

A disordered region spans residues 57–84; sequence TQKKGRQPPGPRRKAGPHGHSNLSPHEA. E324, K326, L327, R331, E394, F436, E496, K501, K518, and K520 together coordinate ATP. K326 functions as the N6-AMP-lysine intermediate in the catalytic mechanism. E394 serves as a coordination point for Mg(2+). E496 is a binding site for Mg(2+). 2 consecutive BRCT domains span residues 728–821 and 900–989; these read PQSK…LPYL and YMFS…RYQW.

It belongs to the ATP-dependent DNA ligase family. It depends on Mg(2+) as a cofactor.

It is found in the nucleus. The enzyme catalyses ATP + (deoxyribonucleotide)n-3'-hydroxyl + 5'-phospho-(deoxyribonucleotide)m = (deoxyribonucleotide)n+m + AMP + diphosphate.. Its function is as follows. DNA ligase involved in DNA non-homologous end joining (NHEJ); required for double-strand break (DSB) repair. This is DNA ligase 4 (LIG4) from Phaeosphaeria nodorum (strain SN15 / ATCC MYA-4574 / FGSC 10173) (Glume blotch fungus).